We begin with the raw amino-acid sequence, 316 residues long: MKYQVLLYYKYTTIEDPEAFAKEHLAFCKSLNLKGRILVATEGINGTLSGTVEETEKYMEAMQADERFKDTFFKIDPAEEMAFRKMFVRPRSELVALNLEEDVDPLETTGKYLEPAEFKEALLDEDTVVIDARNDYEYDLGHFRGAVRPDIRSFRELPQWIRENKEKFMDKKIVTYCTGGIRCEKFSGWLLKEGFEDVAQLHGGIANYGKNPETRGELWDGKMYVFDDRISVEINHVDKKVIGKDWFDGTPCERYINCANPECNRQILTSEENEHKHLGGCSLECSQHPANRYVKKHNLTEAEVAERLALLEAVEV.

In terms of domain architecture, Rhodanese spans 123 to 217; the sequence is LDEDTVVIDA…YGKNPETRGE (95 aa). Catalysis depends on Cys-177, which acts as the Cysteine persulfide intermediate.

This sequence belongs to the TrhO family.

The catalysed reaction is uridine(34) in tRNA + AH2 + O2 = 5-hydroxyuridine(34) in tRNA + A + H2O. In terms of biological role, catalyzes oxygen-dependent 5-hydroxyuridine (ho5U) modification at position 34 in tRNAs. The chain is tRNA uridine(34) hydroxylase from Enterococcus faecalis (strain ATCC 700802 / V583).